A 297-amino-acid polypeptide reads, in one-letter code: Protein BCCIP homolog (297 aa).

The interval 1–40 is disordered; it reads MSANKQKKLSTMEVDPNEDVSSSSEDDDDDEPHPDAYKGN.

This sequence belongs to the BCP1 family.

The polypeptide is Protein BCCIP homolog (Drosophila melanogaster (Fruit fly)).